Here is a 160-residue protein sequence, read N- to C-terminus: CST complex subunit STN1 (160 aa).

The OB DNA-binding region spans 41 to 133 (VEIVGTIVSR…QITANVAVAE (93 aa)).

It belongs to the STN1 family. In terms of assembly, component of the CST complex, composed of CTC1, TEN1 and STN1. Interacts with CTC1. Interacts with TEN1. Interacts with POT1A. In vitro interaction with TEN1 and POT1A is mutually exclusive, indicating that POT1A and TEN1 may compete for the same binding site. As to expression, widely expressed.

Its subcellular location is the nucleus. It is found in the chromosome. The protein resides in the telomere. Its function is as follows. Component of the CST complex, a complex that binds to single-stranded DNA and is required to protect telomeres from DNA degradation. The CST complex binds single-stranded DNA with high affinity in a sequence-independent manner, while isolated subunits bind DNA with low affinity by themselves. Associates with enzymatically active telomerase. Plays a genomewide role in DNA replication and facilitates re-replication at non-telomeric loci. In Arabidopsis thaliana (Mouse-ear cress), this protein is CST complex subunit STN1.